The primary structure comprises 472 residues: Serine/threonine-protein phosphatase T (472 aa).

TPR repeat units lie at residues 7–40 (ADKL…TKTP), 41–73 (TLFC…EPTF), and 74–107 (AKAY…APQN). The Mn(2+) site is built by Asp217, His219, Asp246, and Asn278. The Proton donor/acceptor role is filled by His279. Positions 327 and 403 each coordinate Mn(2+).

It belongs to the PPP phosphatase family. PP-5 (PP-T) subfamily. Requires Mg(2+) as cofactor. The cofactor is Mn(2+).

It is found in the cytoplasm. It localises to the cytosol. Its subcellular location is the nucleus. It catalyses the reaction O-phospho-L-seryl-[protein] + H2O = L-seryl-[protein] + phosphate. The catalysed reaction is O-phospho-L-threonyl-[protein] + H2O = L-threonyl-[protein] + phosphate. With respect to regulation, activated by arachidonic acid. Its function is as follows. May function as a protein phosphatase. In Trypanosoma brucei brucei (strain 927/4 GUTat10.1), this protein is Serine/threonine-protein phosphatase T.